A 273-amino-acid chain; its full sequence is Dermonecrotic toxin LsaSicTox-alphaIB1avi (273 aa).

H5 is a catalytic residue. Mg(2+) is bound by residues E25 and D27. H41 serves as the catalytic Nucleophile. Disulfide bonds link C45-C51 and C47-C190. Residue D85 coordinates Mg(2+).

The protein belongs to the arthropod phospholipase D family. Class II subfamily. Mg(2+) is required as a cofactor. In terms of tissue distribution, expressed by the venom gland.

The protein localises to the secreted. It carries out the reaction an N-(acyl)-sphingosylphosphocholine = an N-(acyl)-sphingosyl-1,3-cyclic phosphate + choline. The catalysed reaction is an N-(acyl)-sphingosylphosphoethanolamine = an N-(acyl)-sphingosyl-1,3-cyclic phosphate + ethanolamine. It catalyses the reaction a 1-acyl-sn-glycero-3-phosphocholine = a 1-acyl-sn-glycero-2,3-cyclic phosphate + choline. The enzyme catalyses a 1-acyl-sn-glycero-3-phosphoethanolamine = a 1-acyl-sn-glycero-2,3-cyclic phosphate + ethanolamine. Functionally, dermonecrotic toxins cleave the phosphodiester linkage between the phosphate and headgroup of certain phospholipids (sphingolipid and lysolipid substrates), forming an alcohol (often choline) and a cyclic phosphate. This toxin acts on sphingomyelin (SM). It may also act on ceramide phosphoethanolamine (CPE), lysophosphatidylcholine (LPC) and lysophosphatidylethanolamine (LPE), but not on lysophosphatidylserine (LPS), and lysophosphatidylglycerol (LPG). It acts by transphosphatidylation, releasing exclusively cyclic phosphate products as second products. Induces dermonecrosis, hemolysis, increased vascular permeability, edema, inflammatory response, and platelet aggregation. The polypeptide is Dermonecrotic toxin LsaSicTox-alphaIB1avi (Loxosceles sabina (Tucson recluse spider)).